Here is a 307-residue protein sequence, read N- to C-terminus: Streptomycin 6-kinase (307 aa).

A streptomycin-binding site is contributed by 133–145 (LAGLLARLVSVPA). Aspartate 201 serves as the catalytic Proton acceptor.

The protein belongs to the aminoglycoside phosphotransferase family.

The enzyme catalyses streptomycin + ATP = streptomycin 6-phosphate + ADP + H(+). In terms of biological role, the aminoglycoside phosphotransferases achieve inactivation of their antibiotic substrates by phosphorylation. The protein is Streptomycin 6-kinase (sph) of Streptomyces glaucescens.